We begin with the raw amino-acid sequence, 287 residues long: Acetyl-coenzyme A carboxylase carboxyl transferase subunit beta (287 aa).

Residues 36 to 287 form the CoA carboxyltransferase N-terminal domain; that stretch reads MWVKCDRCGK…KVLYKILELH (252 aa). Zn(2+) contacts are provided by cysteine 40, cysteine 43, cysteine 59, and cysteine 62. The C4-type zinc finger occupies 40–62; it reads CDRCGKTLYKKDLDENLKVCKFC.

The protein belongs to the AccD/PCCB family. As to quaternary structure, acetyl-CoA carboxylase is a heterohexamer composed of biotin carboxyl carrier protein (AccB), biotin carboxylase (AccC) and two subunits each of ACCase subunit alpha (AccA) and ACCase subunit beta (AccD). Requires Zn(2+) as cofactor.

The protein resides in the cytoplasm. It catalyses the reaction N(6)-carboxybiotinyl-L-lysyl-[protein] + acetyl-CoA = N(6)-biotinyl-L-lysyl-[protein] + malonyl-CoA. The protein operates within lipid metabolism; malonyl-CoA biosynthesis; malonyl-CoA from acetyl-CoA: step 1/1. Component of the acetyl coenzyme A carboxylase (ACC) complex. Biotin carboxylase (BC) catalyzes the carboxylation of biotin on its carrier protein (BCCP) and then the CO(2) group is transferred by the transcarboxylase to acetyl-CoA to form malonyl-CoA. In Clostridium novyi (strain NT), this protein is Acetyl-coenzyme A carboxylase carboxyl transferase subunit beta.